A 516-amino-acid polypeptide reads, in one-letter code: MAVPTFVDRVTLHVSAGRGGNGVASVHREKFKPLGGPDGGNGGPGGSVTLRVDPDVTTLLDYHHSPKRRAEHGGHGAGAHRNGAHGADLVLPVPDGTVVSDPQGHLLADLVGPGTELVVAQGGRGGLGNAALASAKRKAPGFALLGEPGDELEIVLELKVVADIGLVGFPSAGKSSLIAAISRARPKIADYPFTTLVPNLGVVSAGDTTFTVADVPGLIEGASEGRGLGHDFLRHIERCAAIVHVVDTASIEPGRNPVDDLDVIENELTRYGGLEDRPRLVALNKVDVPDGRDIAGFVVDELRQRGLRVFEVSAASGEGLRELTFAMAGIVEAARAAKPAVEATRIVLRPPSVDGSDAFTVTATPDGWRVRGEKPERWVRQTDFSNDEAVGFLADRLNRLGVETRLAEMGAEEGDAVLIGDPENAVVFDFKPGVDAAAEILSRRGEDQRFDESRPAARRRRAIEEAMADRAEGETRADVARRLDRPAREDGGAYGPQSYEIGGRDDPDWAEEDLGE.

The 158-residue stretch at 4–161 (PTFVDRVTLH…LEIVLELKVV (158 aa)) folds into the Obg domain. Residues 162–332 (ADIGLVGFPS…LTFAMAGIVE (171 aa)) enclose the OBG-type G domain. GTP-binding positions include 168 to 175 (GFPSAGKS), 193 to 197 (FTTLV), 214 to 217 (DVPG), 284 to 287 (NKVD), and 313 to 315 (SAA). Positions 175 and 195 each coordinate Mg(2+). Positions 351–432 (PSVDGSDAFT…ENAVVFDFKP (82 aa)) constitute an OCT domain. Residues 466 to 491 (AMADRAEGETRADVARRLDRPAREDG) are compositionally biased toward basic and acidic residues. The disordered stretch occupies residues 466–516 (AMADRAEGETRADVARRLDRPAREDGGAYGPQSYEIGGRDDPDWAEEDLGE).

Belongs to the TRAFAC class OBG-HflX-like GTPase superfamily. OBG GTPase family. As to quaternary structure, monomer. It depends on Mg(2+) as a cofactor.

Its subcellular location is the cytoplasm. In terms of biological role, an essential GTPase which binds GTP, GDP and possibly (p)ppGpp with moderate affinity, with high nucleotide exchange rates and a fairly low GTP hydrolysis rate. Plays a role in control of the cell cycle, stress response, ribosome biogenesis and in those bacteria that undergo differentiation, in morphogenesis control. This is GTPase Obg from Nocardioides sp. (strain ATCC BAA-499 / JS614).